A 603-amino-acid polypeptide reads, in one-letter code: Protein SHORT-ROOT 2 (603 aa).

Disordered stretches follow at residues 11-58 and 106-140; these read HHHH…HSHS and DFSSSSSSRQFHSGTGAPSSAPVPPPPSATTSSAG. Residues 31–44 are compositionally biased toward low complexity; sequence SYPSSRGSTSSPSS. Over residues 45–58 the composition is skewed to basic residues; sequence HHTHNHTYYHHSHS. Low complexity predominate over residues 108–125; sequence SSSSSSRQFHSGTGAPSS. Residues 179–602 form the GRAS domain; that stretch reads AAPSSSGRWA…QPVVWASAWK (424 aa). Residues 186–249 are leucine repeat I (LRI); it reads RWAAQLLMEC…LTTSGPRTLR (64 aa). The interval 268 to 354 is VHIID; it reads ALKFQELSPW…DTPHLSITTV (87 aa). Residues 318 to 322 carry the VHIID motif; that stretch reads LHILD. The segment at 370–406 is leucine repeat II (LRII); it reads EIGQRLEKFARLMGVPFSFRAVHHAGDLADLDLAALD. The interval 416–514 is PFYRE; it reads LAVNCVNALR…ERAVGRAIVD (99 aa). The tract at residues 517–602 is SAW; it reads SCPASQSAER…QPVVWASAWK (86 aa).

Belongs to the GRAS family. As to quaternary structure, does not interact with SCR1.

The protein localises to the nucleus. Functionally, putative transcription factor involved in asymmetric cell division. The polypeptide is Protein SHORT-ROOT 2 (SHR2) (Oryza sativa subsp. indica (Rice)).